The following is a 228-amino-acid chain: DNA-3-methyladenine glycosylase 1 (228 aa).

Residue aspartate 170 is the Proton acceptor of the active site.

It belongs to the alkylbase DNA glycosidase AlkA family.

The catalysed reaction is Hydrolysis of alkylated DNA, releasing 3-methyladenine, 3-methylguanine, 7-methylguanine and 7-methyladenine.. Its function is as follows. Hydrolysis of the deoxyribose N-glycosidic bond to excise 3-methyladenine or 7-methyladenine from the damaged DNA polymer formed by alkylation lesions. Can release ethylated and propylated bases from DNA in addition to 3-methyladenine. This chain is DNA-3-methyladenine glycosylase 1 (mag1), found in Schizosaccharomyces pombe (strain 972 / ATCC 24843) (Fission yeast).